The following is a 264-amino-acid chain: Probable pectate lyase D (264 aa).

The N-terminal stretch at 1 to 17 (MFFKQLAVLSFATSALA) is a signal peptide. A glycan (N-linked (GlcNAc...) asparagine) is linked at Asn60. Residues 234 to 264 (YEGTDNNDEEPQEISTGPSNACQYTDPLPSC) form a disordered region. The span at 235-245 (EGTDNNDEEPQ) shows a compositional bias: acidic residues. Residues 246–256 (EISTGPSNACQ) show a composition bias toward polar residues.

It belongs to the polysaccharide lyase 3 family. It depends on Ca(2+) as a cofactor.

It localises to the secreted. The enzyme catalyses Eliminative cleavage of (1-&gt;4)-alpha-D-galacturonan to give oligosaccharides with 4-deoxy-alpha-D-galact-4-enuronosyl groups at their non-reducing ends.. Functionally, pectinolytic enzyme consist of four classes of enzymes: pectin lyase, polygalacturonase, pectin methylesterase and rhamnogalacturonase. Among pectinolytic enzymes, pectin lyase is the most important in depolymerization of pectin, since it cleaves internal glycosidic bonds of highly methylated pectins. Favors pectate, the anion, over pectin, the methyl ester. The chain is Probable pectate lyase D (plyD) from Emericella nidulans (strain FGSC A4 / ATCC 38163 / CBS 112.46 / NRRL 194 / M139) (Aspergillus nidulans).